A 253-amino-acid chain; its full sequence is Glucosamine-6-phosphate deaminase (253 aa).

The Proton acceptor; for enolization step role is filled by Asp67. The For ring-opening step role is filled by Asn136. His138 functions as the Proton acceptor; for ring-opening step in the catalytic mechanism. Residue Glu143 is the For ring-opening step of the active site.

Belongs to the glucosamine/galactosamine-6-phosphate isomerase family. NagB subfamily.

It catalyses the reaction alpha-D-glucosamine 6-phosphate + H2O = beta-D-fructose 6-phosphate + NH4(+). It participates in amino-sugar metabolism; N-acetylneuraminate degradation; D-fructose 6-phosphate from N-acetylneuraminate: step 5/5. Catalyzes the reversible isomerization-deamination of glucosamine 6-phosphate (GlcN6P) to form fructose 6-phosphate (Fru6P) and ammonium ion. This Thermoanaerobacter pseudethanolicus (strain ATCC 33223 / 39E) (Clostridium thermohydrosulfuricum) protein is Glucosamine-6-phosphate deaminase.